The following is an 887-amino-acid chain: Alanine--tRNA ligase (887 aa).

Zn(2+) is bound by residues His581, His585, Cys683, and His687.

It belongs to the class-II aminoacyl-tRNA synthetase family. The cofactor is Zn(2+).

Its subcellular location is the cytoplasm. It carries out the reaction tRNA(Ala) + L-alanine + ATP = L-alanyl-tRNA(Ala) + AMP + diphosphate. Its function is as follows. Catalyzes the attachment of alanine to tRNA(Ala) in a two-step reaction: alanine is first activated by ATP to form Ala-AMP and then transferred to the acceptor end of tRNA(Ala). Also edits incorrectly charged Ser-tRNA(Ala) and Gly-tRNA(Ala) via its editing domain. This is Alanine--tRNA ligase from Ehrlichia chaffeensis (strain ATCC CRL-10679 / Arkansas).